The following is a 416-amino-acid chain: Gamma-glutamyl phosphate reductase (416 aa).

The protein belongs to the gamma-glutamyl phosphate reductase family.

Its subcellular location is the cytoplasm. The enzyme catalyses L-glutamate 5-semialdehyde + phosphate + NADP(+) = L-glutamyl 5-phosphate + NADPH + H(+). It functions in the pathway amino-acid biosynthesis; L-proline biosynthesis; L-glutamate 5-semialdehyde from L-glutamate: step 2/2. In terms of biological role, catalyzes the NADPH-dependent reduction of L-glutamate 5-phosphate into L-glutamate 5-semialdehyde and phosphate. The product spontaneously undergoes cyclization to form 1-pyrroline-5-carboxylate. This Streptococcus pyogenes serotype M1 protein is Gamma-glutamyl phosphate reductase.